The primary structure comprises 182 residues: CDP-diacylglycerol--glycerol-3-phosphate 3-phosphatidyltransferase (182 aa).

Residues 2–12 (QFNIPTLLTLF) are Cytoplasmic-facing. The helical transmembrane segment at 13-37 (RVILIPFLVVVFYLPFAWAPMVSAL) threads the bilayer. At 38-60 (IFCIAAITDWFDGFLARRWNQST) the chain is on the periplasmic side. Residues 61-81 (RFGAFLDPVADKVLVAIAMVL) form a helical membrane-spanning segment. Residues 82-86 (VTEHY) are Cytoplasmic-facing. Residues 87–107 (HSWWVTLPAATMIAREIIISA) form a helical membrane-spanning segment. Residues 108 to 145 (LREWMAELGKRSSVAVSWIGKVKTTAQMVALAWLLWRP) are Periplasmic-facing. Residues 146-168 (NIWVEYAGIALFFVAAVLTLWSM) traverse the membrane as a helical segment. Over 169–181 (LQYLSAARGDLLD) the chain is Cytoplasmic.

The protein belongs to the CDP-alcohol phosphatidyltransferase class-I family.

The protein resides in the cell inner membrane. The catalysed reaction is a CDP-1,2-diacyl-sn-glycerol + sn-glycerol 3-phosphate = a 1,2-diacyl-sn-glycero-3-phospho-(1'-sn-glycero-3'-phosphate) + CMP + H(+). The protein operates within phospholipid metabolism; phosphatidylglycerol biosynthesis; phosphatidylglycerol from CDP-diacylglycerol: step 1/2. Its function is as follows. Catalyzes the conversion of cytidine diphosphate diacylglycerol (CDP-DG) and glycerol 3-phosphate into phosphatidylglycerol. Essential for the synthesis of anionic phospholipids, thereby playing a role in balancing the ratio of zwitterionic and anionic phospholipids, which is thought to be important for normal membrane function. The protein is CDP-diacylglycerol--glycerol-3-phosphate 3-phosphatidyltransferase of Salmonella choleraesuis (strain SC-B67).